The sequence spans 191 residues: Transcriptional regulator MET32 (191 aa).

Residues K70 to K96 are disordered. A compositionally biased stretch (basic and acidic residues) spans K85–K96. Residues F98–H120 form a C2H2-type 1 zinc finger. The C2H2-type 2; atypical zinc-finger motif lies at N126–C150.

In terms of assembly, interacts with MET4 and MET28.

The protein resides in the cytoplasm. Its subcellular location is the nucleus. Functionally, auxiliary transcriptional regulator of sulfur amino acid metabolism. Involved in the transcriptional activation of MET28. The protein is Transcriptional regulator MET32 (MET32) of Saccharomyces cerevisiae (strain ATCC 204508 / S288c) (Baker's yeast).